The primary structure comprises 388 residues: Chorismate synthase (388 aa).

Residues Arg-39 and Arg-45 each contribute to the NADP(+) site. Residues 130-132, 251-252, Gly-296, 311-315, and Arg-337 contribute to the FMN site; these read RSS, NA, and KPIPT.

The protein belongs to the chorismate synthase family. Homotetramer. FMNH2 is required as a cofactor.

The catalysed reaction is 5-O-(1-carboxyvinyl)-3-phosphoshikimate = chorismate + phosphate. Its pathway is metabolic intermediate biosynthesis; chorismate biosynthesis; chorismate from D-erythrose 4-phosphate and phosphoenolpyruvate: step 7/7. Catalyzes the anti-1,4-elimination of the C-3 phosphate and the C-6 proR hydrogen from 5-enolpyruvylshikimate-3-phosphate (EPSP) to yield chorismate, which is the branch point compound that serves as the starting substrate for the three terminal pathways of aromatic amino acid biosynthesis. This reaction introduces a second double bond into the aromatic ring system. The chain is Chorismate synthase from Streptococcus pyogenes serotype M49 (strain NZ131).